The primary structure comprises 239 residues: 7-cyano-7-deazaguanine synthase (239 aa).

Residue Phe12 to Leu22 coordinates ATP. Zn(2+) is bound by residues Cys200, Cys215, Cys218, and Cys221.

Belongs to the QueC family. Zn(2+) is required as a cofactor.

It catalyses the reaction 7-carboxy-7-deazaguanine + NH4(+) + ATP = 7-cyano-7-deazaguanine + ADP + phosphate + H2O + H(+). The protein operates within purine metabolism; 7-cyano-7-deazaguanine biosynthesis. Functionally, catalyzes the ATP-dependent conversion of 7-carboxy-7-deazaguanine (CDG) to 7-cyano-7-deazaguanine (preQ(0)). This Hyphomonas neptunium (strain ATCC 15444) protein is 7-cyano-7-deazaguanine synthase.